An 844-amino-acid chain; its full sequence is DNA mismatch repair protein MutS (844 aa).

Residue 610-617 participates in ATP binding; that stretch reads GPNMGGKS.

It belongs to the DNA mismatch repair MutS family.

Its function is as follows. This protein is involved in the repair of mismatches in DNA. It is possible that it carries out the mismatch recognition step. This protein has a weak ATPase activity. This chain is DNA mismatch repair protein MutS, found in Francisella tularensis subsp. tularensis (strain WY96-3418).